The following is a 478-amino-acid chain: Trigger factor (478 aa).

Residues 154 to 167 (MAKDSRSFEPREEG) are compositionally biased toward basic and acidic residues. Disordered stretches follow at residues 154-173 (MAKDSRSFEPREEGAEAQSG) and 444-478 (LFAEDDEADAVTGAAATDEKPSESSNEAAADKAAG). The 86-residue stretch at 173–258 (GDRVTIDFVG…VKAVAAPGET (86 aa)) folds into the PPIase FKBP-type domain.

The protein belongs to the FKBP-type PPIase family. Tig subfamily.

It localises to the cytoplasm. The enzyme catalyses [protein]-peptidylproline (omega=180) = [protein]-peptidylproline (omega=0). In terms of biological role, involved in protein export. Acts as a chaperone by maintaining the newly synthesized protein in an open conformation. Functions as a peptidyl-prolyl cis-trans isomerase. In Methylorubrum populi (strain ATCC BAA-705 / NCIMB 13946 / BJ001) (Methylobacterium populi), this protein is Trigger factor.